Reading from the N-terminus, the 477-residue chain is Glycogen synthase (477 aa).

Lys-15 lines the ADP-alpha-D-glucose pocket.

Belongs to the glycosyltransferase 1 family. Bacterial/plant glycogen synthase subfamily.

It catalyses the reaction [(1-&gt;4)-alpha-D-glucosyl](n) + ADP-alpha-D-glucose = [(1-&gt;4)-alpha-D-glucosyl](n+1) + ADP + H(+). The protein operates within glycan biosynthesis; glycogen biosynthesis. Functionally, synthesizes alpha-1,4-glucan chains using ADP-glucose. This chain is Glycogen synthase, found in Streptococcus pneumoniae serotype 2 (strain D39 / NCTC 7466).